Consider the following 332-residue polypeptide: Ubiquinol oxidase 1a, mitochondrial (332 aa).

A mitochondrion-targeting transit peptide spans 1–54; it reads MSSRMAGSAILRHVGGVRLFTASATSPAAAAAAAARPFLAGGEAVPGVWGLRLM. Residues 157-177 form a helical membrane-spanning segment; the sequence is AMMLETVAAVPGMVGGMLLHL. Glu-161, Glu-200, and His-203 together coordinate Fe cation. Residues 219 to 239 traverse the membrane as a helical segment; the sequence is ALVITVQGVFFNAYFLGYLLS. Fe cation is bound by residues Glu-251, Glu-302, and His-305.

The protein belongs to the alternative oxidase family. Homodimer; disulfide-linked. Requires Fe cation as cofactor. As to expression, expressed in roots, leaf sheaths and leaf blades.

It localises to the mitochondrion inner membrane. The catalysed reaction is 2 a ubiquinol + O2 = 2 a ubiquinone + 2 H2O. Catalyzes the cyanide-resistant oxidation of ubiquinol and the reduction of molecular oxygen to water, but does not translocate protons and consequently is not linked to oxidative phosphorylation. May increase respiration when the cytochrome respiratory pathway is restricted, or in response to low temperatures. This chain is Ubiquinol oxidase 1a, mitochondrial, found in Oryza sativa subsp. japonica (Rice).